A 188-amino-acid polypeptide reads, in one-letter code: GMP synthase [glutamine-hydrolyzing] subunit A (188 aa).

Residues 2 to 188 (KVGLVYYGGQ…FKNFLGVCRK (187 aa)) form the Glutamine amidotransferase type-1 domain. Catalysis depends on C79, which acts as the Nucleophile. Active-site residues include H166 and E168.

In terms of assembly, heterodimer composed of a glutamine amidotransferase subunit (A) and a GMP-binding subunit (B).

The catalysed reaction is XMP + L-glutamine + ATP + H2O = GMP + L-glutamate + AMP + diphosphate + 2 H(+). The protein operates within purine metabolism; GMP biosynthesis; GMP from XMP (L-Gln route): step 1/1. Functionally, catalyzes the synthesis of GMP from XMP. The protein is GMP synthase [glutamine-hydrolyzing] subunit A of Saccharolobus solfataricus (strain ATCC 35092 / DSM 1617 / JCM 11322 / P2) (Sulfolobus solfataricus).